The primary structure comprises 904 residues: Translation initiation factor IF-2 (904 aa).

Disordered stretches follow at residues threonine 102–glutamate 122, arginine 134–glycine 252, and histidine 267–threonine 316. Positions arginine 134–glutamate 177 are enriched in basic and acidic residues. The segment covering glutamate 178 to alanine 230 has biased composition (low complexity). The tr-type G domain maps to serine 403–lysine 572. The tract at residues glycine 412–threonine 419 is G1. GTP is bound at residue glycine 412–threonine 419. The G2 stretch occupies residues glycine 437–histidine 441. The tract at residues aspartate 458 to glycine 461 is G3. GTP contacts are provided by residues aspartate 458 to histidine 462 and asparagine 512 to aspartate 515. The interval asparagine 512–aspartate 515 is G4. The segment at serine 548–lysine 550 is G5.

Belongs to the TRAFAC class translation factor GTPase superfamily. Classic translation factor GTPase family. IF-2 subfamily.

It localises to the cytoplasm. One of the essential components for the initiation of protein synthesis. Protects formylmethionyl-tRNA from spontaneous hydrolysis and promotes its binding to the 30S ribosomal subunits. Also involved in the hydrolysis of GTP during the formation of the 70S ribosomal complex. The polypeptide is Translation initiation factor IF-2 (Xanthomonas axonopodis pv. citri (strain 306)).